The following is a 115-amino-acid chain: Superoxide reductase (115 aa).

Residues Glu14, His16, His41, His47, Cys102, and His105 each contribute to the Fe cation site.

It belongs to the desulfoferrodoxin family. In terms of assembly, homotetramer. Fe cation is required as a cofactor.

It carries out the reaction reduced [rubredoxin] + superoxide + 2 H(+) = oxidized [rubredoxin] + H2O2. Functionally, uses electrons from reduced NADP, by way of rubredoxin and an oxidoreductase, to catalyze the reduction of superoxide to hydrogen peroxide. This Pyrococcus abyssi (strain GE5 / Orsay) protein is Superoxide reductase (sorA).